A 718-amino-acid chain; its full sequence is Polyribonucleotide nucleotidyltransferase (718 aa).

Residues Asp-497 and Asp-503 each coordinate Mg(2+). Residues 564–623 form the KH domain; sequence PRLLTMKIDPEQIGLVIGPGGKTIKGITEQTGSKIDIADDGTVTIAALEAEKAEKAKQII. One can recognise an S1 motif domain in the interval 633–701; that stretch reads GEVYMGRVTR…AKGRLNLTRL (69 aa).

Belongs to the polyribonucleotide nucleotidyltransferase family. Requires Mg(2+) as cofactor.

The protein localises to the cytoplasm. It catalyses the reaction RNA(n+1) + phosphate = RNA(n) + a ribonucleoside 5'-diphosphate. Functionally, involved in mRNA degradation. Catalyzes the phosphorolysis of single-stranded polyribonucleotides processively in the 3'- to 5'-direction. This Rippkaea orientalis (strain PCC 8801 / RF-1) (Cyanothece sp. (strain PCC 8801)) protein is Polyribonucleotide nucleotidyltransferase.